A 608-amino-acid chain; its full sequence is Afamin (608 aa).

The N-terminal stretch at 1 to 21 (MRHLKLTGFIFFLLSLTESLA) is a signal peptide. 3 Albumin domains span residues 22-210 (LPTK…APIT), 211-403 (QYLK…KFNE), and 404-599 (TTER…KTGD). N-linked (GlcNAc...) asparagine glycosylation occurs at N33. 10 disulfide bridges follow: C77-C86, C99-C114, C113-C124, C148-C193, C224-C270, C269-C277, C289-C303, C302-C313, C340-C385, and C384-C393. Residue N109 is glycosylated (N-linked (GlcNAc...) asparagine). N153 carries an N-linked (GlcNAc...) asparagine glycan. The interval 215–319 (ALSSYQRNVC…RADCIINANK (105 aa)) is binding pocket for hydrophobic ligands. Residue N402 is glycosylated (N-linked (GlcNAc...) asparagine). Cystine bridges form between C416–C462, C461–C470, C483–C499, C498–C509, and C580–C589. N-linked (GlcNAc...) asparagine glycosylation occurs at N488. The interval 585 to 608 (KPEACFSPESSKTGDVSQDAEKQR) is disordered.

The protein belongs to the ALB/AFP/VDB family. As to quaternary structure, forms a 1:1 complex with Wnt family members; interacts with WNT1, WNT2B, WNT3, WNT3A, WNT5A, WNT7A, WNT7B, WNT8, WNT9A, WNT9B, WNT10A and WNT10B. N-glycosylated; more than 90% of the glycans are sialylated.

The protein localises to the secreted. Its function is as follows. Functions as a carrier for hydrophobic molecules in body fluids. Essential for the solubility and activity of lipidated Wnt family members, including WNT1, WNT2B, WNT3, WNT3A, WNT5A, WNT7A, WNT7B, WNT8, WNT9A, WNT9B, WNT10A and WNT10B. Binds vitamin E. May transport vitamin E in body fluids under conditions where the lipoprotein system is not sufficient. May be involved in the transport of vitamin E across the blood-brain barrier. In Rattus norvegicus (Rat), this protein is Afamin (Afm).